A 158-amino-acid polypeptide reads, in one-letter code: Transcription elongation factor GreA (158 aa).

Residues 53 to 73 are a coiled coil; it reads EQQGMVEARIRDIEAKLSNAQ.

This sequence belongs to the GreA/GreB family.

Necessary for efficient RNA polymerase transcription elongation past template-encoded arresting sites. The arresting sites in DNA have the property of trapping a certain fraction of elongating RNA polymerases that pass through, resulting in locked ternary complexes. Cleavage of the nascent transcript by cleavage factors such as GreA or GreB allows the resumption of elongation from the new 3'terminus. GreA releases sequences of 2 to 3 nucleotides. The sequence is that of Transcription elongation factor GreA from Pseudomonas aeruginosa (strain ATCC 15692 / DSM 22644 / CIP 104116 / JCM 14847 / LMG 12228 / 1C / PRS 101 / PAO1).